The chain runs to 192 residues: MAEPVLVVGLGNPGPQYATTRHNIGFMVADVLADRMGETFKVHKKSGAEVTTGRLAGRPVVLAKPRVYMNESGRQVGPLAKFYSIAPTDVVIIHDELDIDFGRIRLKAGGGVAGHNGLRSVGSALSTNDFQRVRVGIGRPPGQKSGASFVLEPFNSRERPELGTIIEQAADATELLIELGIEPAQNTVHAWS.

A tRNA-binding site is contributed by Tyr-17. His-22 acts as the Proton acceptor in catalysis. 3 residues coordinate tRNA: Tyr-68, Asn-70, and Asn-116.

This sequence belongs to the PTH family. As to quaternary structure, monomer.

The protein resides in the cytoplasm. It catalyses the reaction an N-acyl-L-alpha-aminoacyl-tRNA + H2O = an N-acyl-L-amino acid + a tRNA + H(+). Functionally, hydrolyzes ribosome-free peptidyl-tRNAs (with 1 or more amino acids incorporated), which drop off the ribosome during protein synthesis, or as a result of ribosome stalling. Catalyzes the release of premature peptidyl moieties from peptidyl-tRNA molecules trapped in stalled 50S ribosomal subunits, and thus maintains levels of free tRNAs and 50S ribosomes. The sequence is that of Peptidyl-tRNA hydrolase from Mycolicibacterium gilvum (strain PYR-GCK) (Mycobacterium gilvum (strain PYR-GCK)).